The chain runs to 211 residues: Probable GTP-binding protein EngB (211 aa).

The EngB-type G domain maps to 22–195 (PFPEVAFAGK…WQLIDSYVLP (174 aa)). GTP is bound by residues 30 to 37 (GKSNVGKS), 57 to 61 (GKTQT), 75 to 78 (DLPG), 142 to 145 (TKLD), and 174 to 176 (FSS). Serine 37 and threonine 59 together coordinate Mg(2+).

The protein belongs to the TRAFAC class TrmE-Era-EngA-EngB-Septin-like GTPase superfamily. EngB GTPase family. Mg(2+) is required as a cofactor.

In terms of biological role, necessary for normal cell division and for the maintenance of normal septation. In Lachnospira eligens (strain ATCC 27750 / DSM 3376 / VPI C15-48 / C15-B4) (Eubacterium eligens), this protein is Probable GTP-binding protein EngB.